The chain runs to 38 residues: Large ribosomal subunit protein bL36 (38 aa).

This sequence belongs to the bacterial ribosomal protein bL36 family.

This is Large ribosomal subunit protein bL36 from Alcanivorax borkumensis (strain ATCC 700651 / DSM 11573 / NCIMB 13689 / SK2).